We begin with the raw amino-acid sequence, 832 residues long: Leucine--tRNA ligase (832 aa).

A 'HIGH' region motif is present at residues 58-68 (PYPSGDLHMGH). The short motif at 598 to 602 (AMSKS) is the 'KMSKS' region element. Position 601 (K601) interacts with ATP.

The protein belongs to the class-I aminoacyl-tRNA synthetase family.

It localises to the cytoplasm. The enzyme catalyses tRNA(Leu) + L-leucine + ATP = L-leucyl-tRNA(Leu) + AMP + diphosphate. This chain is Leucine--tRNA ligase, found in Acidothermus cellulolyticus (strain ATCC 43068 / DSM 8971 / 11B).